The primary structure comprises 620 residues: 1-deoxy-D-xylulose-5-phosphate synthase (620 aa).

Residues histidine 80 and glycine 121–serine 123 contribute to the thiamine diphosphate site. Residue aspartate 152 coordinates Mg(2+). Residues glycine 153–alanine 154, asparagine 181, tyrosine 288, and glutamate 370 each bind thiamine diphosphate. Asparagine 181 provides a ligand contact to Mg(2+).

Belongs to the transketolase family. DXPS subfamily. As to quaternary structure, homodimer. The cofactor is Mg(2+). Thiamine diphosphate serves as cofactor.

It catalyses the reaction D-glyceraldehyde 3-phosphate + pyruvate + H(+) = 1-deoxy-D-xylulose 5-phosphate + CO2. It functions in the pathway metabolic intermediate biosynthesis; 1-deoxy-D-xylulose 5-phosphate biosynthesis; 1-deoxy-D-xylulose 5-phosphate from D-glyceraldehyde 3-phosphate and pyruvate: step 1/1. In terms of biological role, catalyzes the acyloin condensation reaction between C atoms 2 and 3 of pyruvate and glyceraldehyde 3-phosphate to yield 1-deoxy-D-xylulose-5-phosphate (DXP). The chain is 1-deoxy-D-xylulose-5-phosphate synthase from Cronobacter sakazakii (strain ATCC BAA-894) (Enterobacter sakazakii).